Reading from the N-terminus, the 37-residue chain is M-oxotoxin-Ot2a (37 aa).

In terms of tissue distribution, expressed by the venom gland.

The protein localises to the secreted. Its function is as follows. Disrupts biological membranes, particularly those rich in phosphocholine. Has antimicrobial activity against Gram-negative bacterium E.coli, Gram-positive bacteria B.subtilis and S.aureus, and hemolytic activity against sheep, pig and guinea pig red blood cells. Has insecticidal activity against S.frugiperda ovarian cells by opening non-selective ion channels. Enhances the insecticidal activity of spider venom neurotoxic peptides. The polypeptide is M-oxotoxin-Ot2a (Oxyopes takobius (Lynx spider)).